Reading from the N-terminus, the 1276-residue chain is Sterol regulatory element-binding protein cleavage-activating protein (1276 aa).

Residues 1–18 (MTLTERLREKISQAFYNH) lie on the Cytoplasmic side of the membrane. The chain crosses the membrane as a helical span at residues 19-39 (GLLCASYPIPIILFTGLCILA). The Lumenal portion of the chain corresponds to 40–279 (CCYPLLKLPL…NLVHVHFKEE (240 aa)). Residues 46 to 284 (KLPLPGTGPV…HFKEEIGIAE (239 aa)) are loop-1. Residues 60–81 (PVKGYSPPPADSDHKQGEPSEQ) are disordered. Asparagine 263 carries N-linked (GlcNAc...) asparagine glycosylation. Residues 280-300 (IGIAELIPLVTTYIILFAYIY) traverse the membrane as a helical segment. The SSD domain maps to 284–442 (ELIPLVTTYI…MLFFTTVLSI (159 aa)). Over 301–312 (FSTRKIDMVKSK) the chain is Cytoplasmic. Residues 313 to 333 (WGLALAAVVTVLSSLLMSVGL) form a helical membrane-spanning segment. Topologically, residues 334-344 (CTLFGLTPTLN) are lumenal. A helical transmembrane segment spans residues 345–365 (GGEIFPYLVVVIGLENVLVLT). The Cytoplasmic portion of the chain corresponds to 366–401 (KSVVSTPVDLEVKLRIAQGLSSESWSIMKNVATELG). Residues 402–422 (IILIGYFTLVPAIQEFCLFAV) form a helical membrane-spanning segment. Valine 423 is a topological domain (lumenal). The chain crosses the membrane as a helical span at residues 424–444 (GLVSDFFLQMLFFTTVLSIDI). Residues 445-518 (RRMELADLNK…FLARTRLAQR (74 aa)) are Cytoplasmic-facing. Residues 447–452 (MELADL) carry the ER export signal motif. Glycyl lysine isopeptide (Lys-Gly) (interchain with G-Cter in ubiquitin) cross-links involve residues lysine 454 and lysine 466. A helical membrane pass occupies residues 519-539 (LIMAGTVVWIGILVYTDPAGL). The interval 535-710 (DPAGLRTYLA…QTHGDITLYK (176 aa)) is loop-7. The Lumenal portion of the chain corresponds to 540 to 707 (RTYLAAQVTE…GGTQTHGDIT (168 aa)). Asparagine 590 and asparagine 641 each carry an N-linked (GlcNAc...) asparagine glycan. Residues 708-728 (LYKVAALGLAAGIVLVLLLLC) form a helical membrane-spanning segment. The Cytoplasmic portion of the chain corresponds to 729–1276 (LYRVLCPRNY…YVPSVLEKLD (548 aa)). The interaction with SREBF2 stretch occupies residues 731 to 1276 (RVLCPRNYGQ…YVPSVLEKLD (546 aa)). One copy of the WD 1 repeat lies at 771–811 (VLRGHLMDIECLASDGMLLVSCCLAGQVCVWDAQTGDCLTR). 6 positions are modified to phosphoserine: serine 821, serine 837, serine 843, serine 850, serine 905, and serine 934. Residues 834–903 (ERLSDGGKAS…RHRAGCGRSR (70 aa)) form a disordered region. Positions 928–958 (SALRPPSPGPPLPQASQEEGTAPEKGSPPLA) are disordered. WD repeat units lie at residues 949 to 999 (APEK…LCCS) and 1002 to 1039 (EISS…SLSP). An Omega-N-methylarginine modification is found at arginine 1048. WD repeat units lie at residues 1074–1111 (AHQK…CLFT), 1114–1152 (GHSG…RVSH), 1155–1192 (AHRG…KLYS), and 1194–1232 (QQDL…LLQT).

This sequence belongs to the WD repeat SCAP family. In terms of assembly, membrane region forms a homotetramer. Component of the SCAP-SREBP complex (composed of SCAP and SREBF1/SREBP1 or SREBF2/SREBP2); interacts with SREBF1/SREBP1 or SREBF2/SREBP2 through its C-terminal cytoplasmic domain. Forms a ternary complex with INSIG1 or INSIG2 through its transmembrane domains at high sterol concentrations. Interacts with PAQR3; the interaction anchors the SCAP-SREBP complex to the Golgi apparatus in low cholesterol conditions. Interacts with the SEC23-SEC24 complex in a SAR1-GTP-dependent manner through an ER export signal in its third cytoplasmic loop. Interacts with RNF139; the interaction inhibits the interaction of SCAP with SEC24B and hampering the ER to Golgi transport of the SCAP-SREBP complex. Interacts with SPRING1. In terms of processing, ubiquitinated at Lys-454 and Lys-466. RNF145 triggers ubiquitination of SCAP, likely inhibiting SCAP-SREBP complex transport to the Golgi apparatus and the subsequent processing/maturation of SREBF2/SREBP2.

It is found in the endoplasmic reticulum membrane. The protein localises to the golgi apparatus membrane. The protein resides in the cytoplasmic vesicle. It localises to the COPII-coated vesicle membrane. Escort protein required for cholesterol as well as lipid homeostasis. Regulates export of the SCAP-SREBP complex from the endoplasmic reticulum to the Golgi upon low cholesterol, thereby regulating the processing of sterol regulatory element-binding proteins (SREBPs) SREBF1/SREBP1 and SREBF2/SREBP2. At high sterol concentrations, formation of a ternary complex with INSIG (INSIG1 or INSIG2) leads to mask the ER export signal in SCAP, promoting retention of the complex in the endoplasmic reticulum. Low sterol concentrations trigger release of INSIG, a conformational change in the SSD domain of SCAP, unmasking of the ER export signal, promoting recruitment into COPII-coated vesicles and transport of the SCAP-SREBP to the Golgi: in the Golgi, SREBPs are then processed, releasing the transcription factor fragment of SREBPs from the membrane, its import into the nucleus and up-regulation of LDLR, INSIG1 and the mevalonate pathway. Binds cholesterol via its SSD domain. The sequence is that of Sterol regulatory element-binding protein cleavage-activating protein from Rattus norvegicus (Rat).